The sequence spans 146 residues: Large ribosomal subunit protein uL13 (146 aa).

The tract at residues 126–146 is disordered; sequence AGPKHPHAAQQPKVYEPRPRG.

The protein belongs to the universal ribosomal protein uL13 family. As to quaternary structure, part of the 50S ribosomal subunit.

Its function is as follows. This protein is one of the early assembly proteins of the 50S ribosomal subunit, although it is not seen to bind rRNA by itself. It is important during the early stages of 50S assembly. The chain is Large ribosomal subunit protein uL13 from Roseiflexus castenholzii (strain DSM 13941 / HLO8).